Reading from the N-terminus, the 343-residue chain is Trans-enoyl reductase ACTTS2 (343 aa).

42–45 (GDWK) contributes to the NADP(+) binding site. 128–135 (VGITTVGQ) contacts substrate. Residues 162–165 (STAT), 185–188 (SPHN), and tyrosine 203 contribute to the NADP(+) site. 268–272 (GYTAL) lines the substrate pocket. 333 to 334 (VS) is an NADP(+) binding site.

This sequence belongs to the zinc-containing alcohol dehydrogenase family. As to quaternary structure, monomer.

Its pathway is mycotoxin biosynthesis. Functionally, trans-enoyl reductase; part of the gene clusters that mediate the biosynthesis of the host-selective toxins (HSTs) ACT-toxins responsible for brown spot of tangerine disease by the tangerine pathotype which affects tangerines and mandarins. ACT-toxins consist of three moieties, 9,10-epoxy-8-hydroxy-9-methyl-decatrienoic acid (EDA), valine and a polyketide. ACT-toxin I is toxic to both citrus and pear; toxin II the 5''-deoxy derivative of ACT-toxin I, is highly toxic to pear and slightly toxic to citrus. On cellular level, ACT-toxins affect plasma membrane of susceptible cells and cause a sudden increase in loss of K(+) after a few minutes of toxin treatment. The acyl-CoA ligase ACTT1, the hydrolase ACTT2, the enoyl-CoA hydratases ACTT3 and ACTT6, and the acyl-CoA synthetase ACTT5 are all involved in the biosynthesis of the AK-, AF- and ACT-toxin common 9,10-epoxy-8-hydroxy-9-methyl-decatrienoic acid (EDA) structural moiety. The exact role of each enzyme, and of additional enzymes identified within the AF-toxin clusters have still to be determined. On the other hand, ACTTS1 to ACTTS4 are specific to the tangerine pathotype. The function of ACTTS3 is to elongate the polyketide chain portion of ACT-toxin that is unique to this toxin. The enoyl-reductase ACTTS2 might complement the missing enoyl-reductase (ER) domain in ACTTS3 in the synthesis of the polyketide portion of ACT-toxin. The roles of the nonribosomal peptide synthetases-related proteins ACTTS1 and ACTTS4 have also still not been elucidated. The sequence is that of Trans-enoyl reductase ACTTS2 from Alternaria alternata (Alternaria rot fungus).